We begin with the raw amino-acid sequence, 319 residues long: Acetyl-coenzyme A carboxylase carboxyl transferase subunit alpha (319 aa).

Positions 35–296 (DLDKEIEQLE…KATLVANLAE (262 aa)) constitute a CoA carboxyltransferase C-terminal domain.

The protein belongs to the AccA family. In terms of assembly, acetyl-CoA carboxylase is a heterohexamer composed of biotin carboxyl carrier protein (AccB), biotin carboxylase (AccC) and two subunits each of ACCase subunit alpha (AccA) and ACCase subunit beta (AccD).

It is found in the cytoplasm. The enzyme catalyses N(6)-carboxybiotinyl-L-lysyl-[protein] + acetyl-CoA = N(6)-biotinyl-L-lysyl-[protein] + malonyl-CoA. It participates in lipid metabolism; malonyl-CoA biosynthesis; malonyl-CoA from acetyl-CoA: step 1/1. In terms of biological role, component of the acetyl coenzyme A carboxylase (ACC) complex. First, biotin carboxylase catalyzes the carboxylation of biotin on its carrier protein (BCCP) and then the CO(2) group is transferred by the carboxyltransferase to acetyl-CoA to form malonyl-CoA. The protein is Acetyl-coenzyme A carboxylase carboxyl transferase subunit alpha of Photobacterium profundum (strain SS9).